The primary structure comprises 226 residues: Peroxiredoxin-like 2C (226 aa).

This sequence belongs to the peroxiredoxin-like PRXL2 family. PRXL2C subfamily. In terms of tissue distribution, expressed in gastric tissues.

Its function is as follows. May positively regulate ERK1/2 signaling and AKT1 activation leading to HIF1A up-regulation with an increased expression of glycolysis genes and enhanced glycolysis. In Homo sapiens (Human), this protein is Peroxiredoxin-like 2C.